A 447-amino-acid polypeptide reads, in one-letter code: Naphthalene 1,2-dioxygenase system, large oxygenase component (447 aa).

In terms of domain architecture, Rieske spans Trp-37 to Glu-135. [2Fe-2S] cluster contacts are provided by Cys-79, His-81, Cys-99, and His-102. Residues His-206, His-211, and Asp-360 each contribute to the Fe cation site.

It belongs to the bacterial ring-hydroxylating dioxygenase alpha subunit family. As to quaternary structure, the naphthalene dioxygenase (NDO) multicomponent enzyme system is composed of an electron transfer component and a dioxygenase component (iron sulfur protein (ISP)). The electron transfer component is composed of a ferredoxin reductase (NagAa) and a ferredoxin (NagAb), and the dioxygenase component is formed by a large alpha subunit (NagAc) and a small beta subunit (NagAd). [2Fe-2S] cluster serves as cofactor. Requires Fe(2+) as cofactor.

The enzyme catalyses naphthalene + NADH + O2 + H(+) = (1R,2S)-1,2-dihydronaphthalene-1,2-diol + NAD(+). The protein operates within aromatic compound metabolism; naphthalene degradation. Its function is as follows. Component of the naphthalene dioxygenase (NDO) multicomponent enzyme system which catalyzes the incorporation of both atoms of molecular oxygen into naphthalene to form cis-(1R,2S)-dihydroxy-1,2-dihydronaphthalene. The alpha subunit has a catalytic role in the holoenzyme. Also able to use styrene as substrate. This chain is Naphthalene 1,2-dioxygenase system, large oxygenase component, found in Ralstonia sp.